The chain runs to 805 residues: U-box domain-containing protein 32 (805 aa).

2 disordered regions span residues 181-205 and 226-284; these read SNNRQTMPPLVQLDSDNETRKSEKL and EKDT…EREG. Over residues 226–239 the composition is skewed to basic and acidic residues; it reads EKDTGQLEREKVEP. Over residues 245–257 the composition is skewed to low complexity; the sequence is FSSGSSSSFGEPV. The stretch at 331 to 434 forms a coiled coil; the sequence is LEGLCIKESS…EVNALRRLVK (104 aa). Positions 460-718 constitute a Protein kinase domain; it reads FDPSWKLGEG…FIDRMKAPEV (259 aa). ATP is bound by residues 466 to 474 and lysine 487; that span reads LGEGKYGSV. A U-box domain is found at 734–805; it reads RPPSHYLCPI…LAIQDWQNQW (72 aa).

Belongs to the protein kinase superfamily. Ser/Thr protein kinase family.

It catalyses the reaction S-ubiquitinyl-[E2 ubiquitin-conjugating enzyme]-L-cysteine + [acceptor protein]-L-lysine = [E2 ubiquitin-conjugating enzyme]-L-cysteine + N(6)-ubiquitinyl-[acceptor protein]-L-lysine.. The protein operates within protein modification; protein ubiquitination. Functionally, functions as an E3 ubiquitin ligase. This Arabidopsis thaliana (Mouse-ear cress) protein is U-box domain-containing protein 32 (PUB32).